We begin with the raw amino-acid sequence, 142 residues long: ATP synthase epsilon chain (142 aa).

Belongs to the ATPase epsilon chain family. As to quaternary structure, F-type ATPases have 2 components, CF(1) - the catalytic core - and CF(0) - the membrane proton channel. CF(1) has five subunits: alpha(3), beta(3), gamma(1), delta(1), epsilon(1). CF(0) has three main subunits: a, b and c.

Its subcellular location is the cell inner membrane. Functionally, produces ATP from ADP in the presence of a proton gradient across the membrane. This Shewanella woodyi (strain ATCC 51908 / MS32) protein is ATP synthase epsilon chain.